A 79-amino-acid chain; its full sequence is MDNVSMDMLYIAVAVMIGLAAIGAAVGIGILGSKFLEGVARQPDLTSLLRTQFFVVMGLVDAIPMIAVGLGLYMLFAVI.

2 consecutive transmembrane segments (helical) span residues 11–31 and 59–79; these read IAVA…IGIL and LVDA…FAVI.

Belongs to the ATPase C chain family. In terms of assembly, F-type ATPases have 2 components, F(1) - the catalytic core - and F(0) - the membrane proton channel. F(1) has five subunits: alpha(3), beta(3), gamma(1), delta(1), epsilon(1). F(0) has three main subunits: a(1), b(2) and c(10-14). The alpha and beta chains form an alternating ring which encloses part of the gamma chain. F(1) is attached to F(0) by a central stalk formed by the gamma and epsilon chains, while a peripheral stalk is formed by the delta and b chains.

Its subcellular location is the cell membrane. In terms of biological role, f(1)F(0) ATP synthase produces ATP from ADP in the presence of a proton or sodium gradient. F-type ATPases consist of two structural domains, F(1) containing the extramembraneous catalytic core and F(0) containing the membrane proton channel, linked together by a central stalk and a peripheral stalk. During catalysis, ATP synthesis in the catalytic domain of F(1) is coupled via a rotary mechanism of the central stalk subunits to proton translocation. Functionally, key component of the F(0) channel; it plays a direct role in translocation across the membrane. A homomeric c-ring of between 10-14 subunits forms the central stalk rotor element with the F(1) delta and epsilon subunits. This chain is ATP synthase subunit c, found in Buchnera aphidicola subsp. Baizongia pistaciae (strain Bp).